The sequence spans 55 residues: UPF0391 membrane protein Sfum_0248 (55 aa).

The next 2 membrane-spanning stretches (helical) occupy residues 4–24 (WALI…GGII) and 28–48 (AWIA…SLLS).

It belongs to the UPF0391 family.

It localises to the cell membrane. This chain is UPF0391 membrane protein Sfum_0248, found in Syntrophobacter fumaroxidans (strain DSM 10017 / MPOB).